The primary structure comprises 67 residues: Small, acid-soluble spore protein 2 (67 aa).

It belongs to the alpha/beta-type SASP family.

In terms of biological role, SASP are bound to spore DNA. They are double-stranded DNA-binding proteins that cause DNA to change to an a-like conformation. They protect the DNA backbone from chemical and enzymatic cleavage and are thus involved in dormant spore's high resistance to UV light. This Sporosarcina ureae protein is Small, acid-soluble spore protein 2 (Su-2).